Reading from the N-terminus, the 203-residue chain is dITP/XTP pyrophosphatase (203 aa).

7 to 12 (TGNRDK) is a substrate binding site. Asp-73 acts as the Proton acceptor in catalysis. Asp-73 is a Mg(2+) binding site. Residues Ser-74, 155–158 (FGYD), Lys-178, and 183–184 (HR) each bind substrate.

Belongs to the HAM1 NTPase family. In terms of assembly, homodimer. Mg(2+) is required as a cofactor.

The enzyme catalyses XTP + H2O = XMP + diphosphate + H(+). It carries out the reaction dITP + H2O = dIMP + diphosphate + H(+). It catalyses the reaction ITP + H2O = IMP + diphosphate + H(+). In terms of biological role, pyrophosphatase that catalyzes the hydrolysis of nucleoside triphosphates to their monophosphate derivatives, with a high preference for the non-canonical purine nucleotides XTP (xanthosine triphosphate), dITP (deoxyinosine triphosphate) and ITP. Seems to function as a house-cleaning enzyme that removes non-canonical purine nucleotides from the nucleotide pool, thus preventing their incorporation into DNA/RNA and avoiding chromosomal lesions. The chain is dITP/XTP pyrophosphatase from Wolinella succinogenes (strain ATCC 29543 / DSM 1740 / CCUG 13145 / JCM 31913 / LMG 7466 / NCTC 11488 / FDC 602W) (Vibrio succinogenes).